A 477-amino-acid polypeptide reads, in one-letter code: UDP-N-acetylmuramate--L-alanine ligase (477 aa).

122-128 (GTHGKTT) serves as a coordination point for ATP.

Belongs to the MurCDEF family.

The protein localises to the cytoplasm. It catalyses the reaction UDP-N-acetyl-alpha-D-muramate + L-alanine + ATP = UDP-N-acetyl-alpha-D-muramoyl-L-alanine + ADP + phosphate + H(+). The protein operates within cell wall biogenesis; peptidoglycan biosynthesis. In terms of biological role, cell wall formation. The chain is UDP-N-acetylmuramate--L-alanine ligase from Xanthomonas euvesicatoria pv. vesicatoria (strain 85-10) (Xanthomonas campestris pv. vesicatoria).